Consider the following 119-residue polypeptide: Holo-[acyl-carrier-protein] synthase (119 aa).

2 residues coordinate Mg(2+): D8 and E58.

The protein belongs to the P-Pant transferase superfamily. AcpS family. Requires Mg(2+) as cofactor.

It localises to the cytoplasm. The catalysed reaction is apo-[ACP] + CoA = holo-[ACP] + adenosine 3',5'-bisphosphate + H(+). Transfers the 4'-phosphopantetheine moiety from coenzyme A to a Ser of acyl-carrier-protein. The sequence is that of Holo-[acyl-carrier-protein] synthase from Bacillus mycoides (strain KBAB4) (Bacillus weihenstephanensis).